The following is a 630-amino-acid chain: MALTKLVDAGAWQVEVAPAGTVQDSLVFLSPRNFGGVPGTGVDSVAAIEAALAAGDVDLGGEHWFISRPIYCVSGRTIQNGKISTLAAQGSGFMAGSIFAPGNYHPVYVDPVPKLACSSTNGSATITVSSHEFVVGDLVRLSSTRGIIGSDAVLVPWYMQLARVVGVSGDTVKLDAPIDTTETLVVHKATPAGYNARFNKPLFVLERATFRNIEVDTWDYWTADSATFECAFEGIRGKARSVVYGNTFCRTNFDNIDITFSNKASEMAFGSHDTNLSNIKFRADSQNWDSTNSVGISWAESGRRCTLDNWQLLVPQGVNLSVLVRISSHRDVQIRKGFIQVHSSSNNILSVEHYGGDRPPCNNILFEDIDVNATGAAAVVVDVYKSANDSAINAVRFEGISYRGATPSVALMRQRGTTSNQVTGVRASLYSANGGAFLVSSAMAWDVRLYGPGLQVPAAVAVLGRTAVLSASRSNLHALRWVTEAIIGVTSTTPGNVLREAVIPAGTLRASDYIDFVISGSTGGATSTKDVLVGVLDSGSNFQGVGFTAPTTEESYYTVQGRISFPTTGNCLITATIGRAGVGVSYARTLVSISNYTTNDVKLQVQAWVGSSAGSLSVQHGCFAPSELTG.

It belongs to the K63-specific depolymerase family. As to quaternary structure, homotrimer.

The protein localises to the virion. Functionally, functions as a receptor binding protein (RBP) and probably mediates the attachment to the host capsular exopolysaccharides. Displays a depolymerase activity that specifically degrades the K63-type polysaccharides of Klebsiella pneumoniae capsule. The polypeptide is Depolymerase, capsule K63-specific (Klebsiella phage KP34 (Bacteriophage KP34)).